The following is a 332-amino-acid chain: Adenosine deaminase (332 aa).

Zn(2+)-binding residues include histidine 12 and histidine 14. Substrate is bound by residues histidine 14, aspartate 16, and glycine 170. Zn(2+) is bound at residue histidine 197. Residue glutamate 200 is the Proton donor of the active site. Aspartate 278 provides a ligand contact to Zn(2+).

It belongs to the metallo-dependent hydrolases superfamily. Adenosine and AMP deaminases family. Adenosine deaminase subfamily. It depends on Zn(2+) as a cofactor.

The catalysed reaction is adenosine + H2O + H(+) = inosine + NH4(+). It catalyses the reaction 2'-deoxyadenosine + H2O + H(+) = 2'-deoxyinosine + NH4(+). In terms of biological role, catalyzes the hydrolytic deamination of adenosine and 2-deoxyadenosine. This chain is Adenosine deaminase, found in Clostridium perfringens (strain ATCC 13124 / DSM 756 / JCM 1290 / NCIMB 6125 / NCTC 8237 / Type A).